Consider the following 353-residue polypeptide: tRNA-specific 2-thiouridylase MnmA (353 aa).

Residues 7-14 (GLSGGVDS) and L33 contribute to the ATP site. C94 serves as the catalytic Nucleophile. A disulfide bridge links C94 with C193. ATP is bound at residue G119. Positions 143–145 (KDQ) are interaction with tRNA. C193 serves as the catalytic Cysteine persulfide intermediate. Residues 298–299 (RY) are interaction with tRNA.

Belongs to the MnmA/TRMU family.

The protein localises to the cytoplasm. The enzyme catalyses S-sulfanyl-L-cysteinyl-[protein] + uridine(34) in tRNA + AH2 + ATP = 2-thiouridine(34) in tRNA + L-cysteinyl-[protein] + A + AMP + diphosphate + H(+). Catalyzes the 2-thiolation of uridine at the wobble position (U34) of tRNA, leading to the formation of s(2)U34. This Picosynechococcus sp. (strain ATCC 27264 / PCC 7002 / PR-6) (Agmenellum quadruplicatum) protein is tRNA-specific 2-thiouridylase MnmA.